Here is a 288-residue protein sequence, read N- to C-terminus: S-methyl-5'-thioadenosine phosphorylase (288 aa).

Residues Ser-10, 52–53, and 85–86 each bind phosphate; these read RH and TA. A substrate-binding site is contributed by Met-188. Thr-189 lines the phosphate pocket. 212-214 contacts substrate; sequence DYD.

Belongs to the PNP/MTAP phosphorylase family. MTAP subfamily. In terms of assembly, homotrimer.

It is found in the cytoplasm. Its subcellular location is the nucleus. The enzyme catalyses S-methyl-5'-thioadenosine + phosphate = 5-(methylsulfanyl)-alpha-D-ribose 1-phosphate + adenine. The protein operates within amino-acid biosynthesis; L-methionine biosynthesis via salvage pathway; S-methyl-5-thio-alpha-D-ribose 1-phosphate from S-methyl-5'-thioadenosine (phosphorylase route): step 1/1. Catalyzes the reversible phosphorylation of S-methyl-5'-thioadenosine (MTA) to adenine and 5-methylthioribose-1-phosphate. Involved in the breakdown of MTA, a major by-product of polyamine biosynthesis. Responsible for the first step in the methionine salvage pathway after MTA has been generated from S-adenosylmethionine. Has broad substrate specificity with 6-aminopurine nucleosides as preferred substrates. The protein is S-methyl-5'-thioadenosine phosphorylase of Caenorhabditis elegans.